A 328-amino-acid chain; its full sequence is Methionyl-tRNA formyltransferase (328 aa).

A (6S)-5,6,7,8-tetrahydrofolate-binding site is contributed by 121 to 124; it reads SLLP.

The protein belongs to the Fmt family.

The enzyme catalyses L-methionyl-tRNA(fMet) + (6R)-10-formyltetrahydrofolate = N-formyl-L-methionyl-tRNA(fMet) + (6S)-5,6,7,8-tetrahydrofolate + H(+). Attaches a formyl group to the free amino group of methionyl-tRNA(fMet). The formyl group appears to play a dual role in the initiator identity of N-formylmethionyl-tRNA by promoting its recognition by IF2 and preventing the misappropriation of this tRNA by the elongation apparatus. The polypeptide is Methionyl-tRNA formyltransferase (Paraburkholderia phytofirmans (strain DSM 17436 / LMG 22146 / PsJN) (Burkholderia phytofirmans)).